A 733-amino-acid chain; its full sequence is Centrosomal protein of 68 kDa (733 aa).

Residues 71-80 are compositionally biased toward basic and acidic residues; it reads SKEPVADRSK. 3 disordered regions span residues 71–92, 150–207, and 222–244; these read SKEP…SASV, GLSQ…SFAN, and VVGA…DATG. The segment covering 178-190 has biased composition (low complexity); it reads SSRSISASSVGSS. Residues 231–241 show a composition bias toward polar residues; it reads GSAQPLTSGSD. A Phosphoserine modification is found at Ser315. The tract at residues 420–442 is disordered; that stretch reads PQLKTKEKEPPFPRQKRGRQHVS. A phosphoserine mark is found at Ser453 and Ser459. Residues 497–571 are disordered; the sequence is HSSLQVSDSD…KPLKTQPASK (75 aa). Positions 540–569 are enriched in polar residues; it reads IQPQDSRGKSSLMSNQTLGVSSKPLKTQPA.

Interacts with CNTLN; the interaction recruits CEP68 to the centrosome. Interacts with the SCF(FBXW11) complex which contains SKP1, CUL1 and FBXW11; the interaction is probably mediated by FBXW11 and the complex also contains CDK5RAP2 and PCNT. Also interacts with F-box protein BTRC. Interacts with serine/threonine-protein kinase PLK1; the interaction leads to phosphorylation of CEP68 and its subsequent degradation. Interacts with NEK2; the interaction leads to phosphorylation of CEP68. In terms of processing, phosphorylation by PLK1 is required for binding to BTRC in prometaphase. Phosphorylated directly or indirectly by NEK2. NEK2-mediated phosphorylation promotes CEP68 dissociation from the centrosome and its degradation at the onset of mitosis. Post-translationally, ubiquitinated and targeted for proteasomal degradation in early mitosis by the SCF(BTRC) and/or SCF(FBXW11) E3 ubiquitin-protein ligase complexes. Degradation is complete by prometaphase and is required for removal of CDK5RAP2 from the peripheral pericentriolar material and subsequent centriole separation.

The protein resides in the cytoplasm. It localises to the cytoskeleton. The protein localises to the microtubule organizing center. Its subcellular location is the centrosome. Functionally, involved in maintenance of centrosome cohesion, probably as part of a linker structure which prevents centrosome splitting. Required for localization of CDK5RAP2 to the centrosome during interphase. Contributes to CROCC/rootletin filament formation. This Mus musculus (Mouse) protein is Centrosomal protein of 68 kDa (Cep68).